Consider the following 264-residue polypeptide: Small ribosomal subunit protein eS1 (264 aa).

Lys34 is subject to N6-acetyllysine; alternate. Residue Lys34 forms a Glycyl lysine isopeptide (Lys-Gly) (interchain with G-Cter in SUMO2); alternate linkage. Residue Lys56 is modified to N6-acetyllysine. Position 155 is an ADP-ribosyltyrosine (Tyr155). Residues 232 to 264 are disordered; the sequence is HGEGSSSGKATGDETGAKVERADGYEPPVQESV. Ser236 and Ser237 each carry phosphoserine. Residues 242–255 are compositionally biased toward basic and acidic residues; sequence TGDETGAKVERADG. Residue Lys249 is modified to N6-acetyllysine; alternate. Lys249 participates in a covalent cross-link: Glycyl lysine isopeptide (Lys-Gly) (interchain with G-Cter in SUMO2); alternate. Residue Tyr256 is modified to Phosphotyrosine. Position 263 is a phosphoserine (Ser263).

The protein belongs to the eukaryotic ribosomal protein eS1 family. Component of the small ribosomal subunit. Mature ribosomes consist of a small (40S) and a large (60S) subunit. The 40S subunit contains about 33 different proteins and 1 molecule of RNA (18S). The 60S subunit contains about 49 different proteins and 3 molecules of RNA (28S, 5.8S and 5S). Identified in a IGF2BP1-dependent mRNP granule complex containing untranslated mRNAs. Binds with high affinity to IPO4. Interacts with DDIT3. Part of the small subunit (SSU) processome, composed of more than 70 proteins and the RNA chaperone small nucleolar RNA (snoRNA) U3. In terms of processing, ADP-ribosylated at Tyr-155 by PARP1 in presence of HPF1.

The protein localises to the cytoplasm. It localises to the nucleus. Its subcellular location is the nucleolus. Functionally, component of the small ribosomal subunit. The ribosome is a large ribonucleoprotein complex responsible for the synthesis of proteins in the cell. Part of the small subunit (SSU) processome, first precursor of the small eukaryotic ribosomal subunit. During the assembly of the SSU processome in the nucleolus, many ribosome biogenesis factors, an RNA chaperone and ribosomal proteins associate with the nascent pre-rRNA and work in concert to generate RNA folding, modifications, rearrangements and cleavage as well as targeted degradation of pre-ribosomal RNA by the RNA exosome. May play a role during erythropoiesis through regulation of transcription factor DDIT3. This Macaca fascicularis (Crab-eating macaque) protein is Small ribosomal subunit protein eS1.